Consider the following 463-residue polypeptide: Glycine--tRNA ligase (463 aa).

Residues R100 and E175 each contribute to the substrate site. Residues 207-209 (RNE), 217-222 (FRTREF), 291-292 (EL), and 335-338 (GADR) each bind ATP. Position 222-226 (222-226 (FEQME)) interacts with substrate. 331–335 (EPSLG) lines the substrate pocket.

Belongs to the class-II aminoacyl-tRNA synthetase family. In terms of assembly, homodimer.

Its subcellular location is the cytoplasm. It catalyses the reaction tRNA(Gly) + glycine + ATP = glycyl-tRNA(Gly) + AMP + diphosphate. Functionally, catalyzes the attachment of glycine to tRNA(Gly). The protein is Glycine--tRNA ligase of Clostridium tetani (strain Massachusetts / E88).